We begin with the raw amino-acid sequence, 107 residues long: Heme-degrading monooxygenase (107 aa).

Positions 2-94 constitute an ABM domain; sequence IIVTNTAKIT…YILDNKISYY (93 aa). N6 is a binding site for Fe cation. Residue H76 participates in heme binding.

This sequence belongs to the antibiotic biosynthesis monooxygenase family. Heme-degrading monooxygenase IsdG subfamily. As to quaternary structure, homodimer.

The protein resides in the cytoplasm. The catalysed reaction is heme b + 3 reduced [NADPH--hemoprotein reductase] + 3 O2 = biliverdin IXalpha + CO + Fe(2+) + 3 oxidized [NADPH--hemoprotein reductase] + 3 H2O + H(+). Allows bacterial pathogens to use the host heme as an iron source. Catalyzes the oxidative degradation of the heme macrocyclic porphyrin ring to the biliverdin in the presence of a suitable electron donor such as ascorbate or NADPH--cytochrome P450 reductase, with subsequent release of free iron. The protein is Heme-degrading monooxygenase of Bacillus cereus (strain AH187).